Here is a 65-residue protein sequence, read N- to C-terminus: Large ribosomal subunit protein uL29 (65 aa).

This sequence belongs to the universal ribosomal protein uL29 family.

This is Large ribosomal subunit protein uL29 from Mycoplasmopsis synoviae (strain 53) (Mycoplasma synoviae).